Reading from the N-terminus, the 830-residue chain is Penicillin-binding protein 1A (830 aa).

Basic residues predominate over residues 1–17 (MTERKREHKDRKQKKNS). The tract at residues 1-20 (MTERKREHKDRKQKKNSPKN) is disordered. At 1-30 (MTERKREHKDRKQKKNSPKNQSKVTKFLKW) the chain is on the cytoplasmic side. The chain crosses the membrane as a helical; Signal-anchor for type II membrane protein span at residues 31 to 51 (FFIGILLLGITAVTVVGIYVL). Topologically, residues 52-830 (SIIRSSPELD…QNGQNNNITQ (779 aa)) are extracellular. The segment at 72 to 244 (SILYDDQGNF…PTSYDGLSEA (173 aa)) is transglycosylase. Catalysis depends on E111, which acts as the Proton donor; for transglycosylase activity. Residues 378 to 663 (ASATIIDYKT…TSPIFGKIMG (286 aa)) form a transpeptidase region. The active-site Acyl-ester intermediate; for transpeptidase activity is the S417. Residues 731–830 (APDTNDNNNS…QNGQNNNITQ (100 aa)) are disordered. The span at 735-746 (NDNNNSGANEGN) shows a compositional bias: low complexity. Residues 747 to 758 (KQQETKPEEVKP) show a composition bias toward basic and acidic residues. 2 stretches are compositionally biased toward low complexity: residues 759-807 (NENN…NTNN) and 816-830 (GNNQNQNGQNNNITQ).

This sequence in the N-terminal section; belongs to the glycosyltransferase 51 family. It in the C-terminal section; belongs to the transpeptidase family.

The protein resides in the cell membrane. The enzyme catalyses [GlcNAc-(1-&gt;4)-Mur2Ac(oyl-L-Ala-gamma-D-Glu-L-Lys-D-Ala-D-Ala)](n)-di-trans,octa-cis-undecaprenyl diphosphate + beta-D-GlcNAc-(1-&gt;4)-Mur2Ac(oyl-L-Ala-gamma-D-Glu-L-Lys-D-Ala-D-Ala)-di-trans,octa-cis-undecaprenyl diphosphate = [GlcNAc-(1-&gt;4)-Mur2Ac(oyl-L-Ala-gamma-D-Glu-L-Lys-D-Ala-D-Ala)](n+1)-di-trans,octa-cis-undecaprenyl diphosphate + di-trans,octa-cis-undecaprenyl diphosphate + H(+). The catalysed reaction is Preferential cleavage: (Ac)2-L-Lys-D-Ala-|-D-Ala. Also transpeptidation of peptidyl-alanyl moieties that are N-acyl substituents of D-alanine.. It participates in cell wall biogenesis; peptidoglycan biosynthesis. In terms of biological role, cell wall formation. Synthesis of cross-linked peptidoglycan from the lipid intermediates. The enzyme has a penicillin-insensitive transglycosylase N-terminal domain (formation of linear glycan strands) and a penicillin-sensitive transpeptidase C-terminal domain (cross-linking of the peptide subunits). The protein is Penicillin-binding protein 1A (pbpA) of Clostridium perfringens (strain ATCC 13124 / DSM 756 / JCM 1290 / NCIMB 6125 / NCTC 8237 / Type A).